We begin with the raw amino-acid sequence, 473 residues long: tRNA-2-methylthio-N(6)-dimethylallyladenosine synthase (473 aa).

An MTTase N-terminal domain is found at 5 to 125 (RKLHIKSFGC…LPQLLAEAAR (121 aa)). The [4Fe-4S] cluster site is built by cysteine 14, cysteine 50, cysteine 88, cysteine 166, cysteine 170, and cysteine 173. One can recognise a Radical SAM core domain in the interval 152–384 (RARGISAFVT…QELIDSQQAA (233 aa)). The TRAM domain maps to 387–449 (AAVIGTTVEV…RYSLIGELAA (63 aa)). The tract at residues 452 to 473 (QHSGFATRSEDSPQSLPITTGA) is disordered.

It belongs to the methylthiotransferase family. MiaB subfamily. As to quaternary structure, monomer. It depends on [4Fe-4S] cluster as a cofactor.

It is found in the cytoplasm. The catalysed reaction is N(6)-dimethylallyladenosine(37) in tRNA + (sulfur carrier)-SH + AH2 + 2 S-adenosyl-L-methionine = 2-methylsulfanyl-N(6)-dimethylallyladenosine(37) in tRNA + (sulfur carrier)-H + 5'-deoxyadenosine + L-methionine + A + S-adenosyl-L-homocysteine + 2 H(+). Functionally, catalyzes the methylthiolation of N6-(dimethylallyl)adenosine (i(6)A), leading to the formation of 2-methylthio-N6-(dimethylallyl)adenosine (ms(2)i(6)A) at position 37 in tRNAs that read codons beginning with uridine. This is tRNA-2-methylthio-N(6)-dimethylallyladenosine synthase from Rhodopseudomonas palustris (strain BisB18).